We begin with the raw amino-acid sequence, 342 residues long: MDSELKGQQLSDAEWCVKKINGEGNCLLLFLPMSSPTTIVMIVLVSLERLVPYVFKLSQTQLSQQCQSQGFTDSISLNLIKLKLMDILQAPQEINQIGLVDSNLVFSFDVSADITVSINSVPSHVTKDMFYMILQSLCMLLLKLVNLSTQYHYVQRDILNEKQKCLDFLLISLRDLDGGSKVISQWAPENSKNYESLQQCTDDDIIKKLLHKGKFQHQEFLADSLKTLLSLRNKFQDVSRFEESGELNKKERVRFPAVNHFYNDDFELQADPTNEARPNSRGKIKPKTDFKPKSRESSTSSQLRLENFSESEATPEKTKSSSSLVEEYPQKKRKFGKVRIKN.

2 helical membrane-spanning segments follow: residues L27–L47 and M129–T149. Residues L173–N342 are interaction with LIF1. The interval A270 to N342 is disordered. A compositionally biased stretch (basic and acidic residues) spans P286–E296. The segment covering S297–E312 has biased composition (polar residues). The segment covering K331–N342 has biased composition (basic residues).

It belongs to the XRCC4-XLF family. XLF subfamily. Interacts (via C-terminus) with LIF1 (via N-terminus); the interaction is direct. Interacts with DNL4.

Its subcellular location is the cytoplasm. It localises to the nucleus membrane. Involved in non-homologous end joining (NHEJ). Facilitates the transport of LIF1 into the nucleus, where it can interact with DNA ligase DNL4 to repair double-strand breaks (DSB). Mediates mating-type regulation of NHEJ. Prevents chromosome circularisation by NHEJ in absence of telomerase. This Saccharomyces cerevisiae (strain ATCC 204508 / S288c) (Baker's yeast) protein is Non-homologous end-joining protein 1 (NEJ1).